The primary structure comprises 660 residues: Bifunctional polymyxin resistance protein ArnA (660 aa).

The interval 1–304 (MKAVIFAYHD…TLGLVAGARL (304 aa)) is formyltransferase ArnAFT. Residue His-104 is the Proton donor; for formyltransferase activity of the active site. (6R)-10-formyltetrahydrofolate contacts are provided by residues Arg-114 and 136–140 (VKRAD). Residues 314–660 (RRIRVLILGV…RSVDIAERAS (347 aa)) form a dehydrogenase ArnADH region. NAD(+)-binding positions include Asp-347 and 368 to 369 (DI). UDP-alpha-D-glucuronate contacts are provided by residues Ala-393, Tyr-398, and 432–433 (TS). Catalysis depends on Glu-434, which acts as the Proton acceptor; for decarboxylase activity. UDP-alpha-D-glucuronate contacts are provided by residues Arg-460, Asn-492, 526–535 (KLIDGGQQKR), and Tyr-613. The active-site Proton donor; for decarboxylase activity is Arg-619.

This sequence in the N-terminal section; belongs to the Fmt family. UDP-L-Ara4N formyltransferase subfamily. In the C-terminal section; belongs to the NAD(P)-dependent epimerase/dehydratase family. UDP-glucuronic acid decarboxylase subfamily. As to quaternary structure, homohexamer, formed by a dimer of trimers.

It catalyses the reaction UDP-alpha-D-glucuronate + NAD(+) = UDP-beta-L-threo-pentopyranos-4-ulose + CO2 + NADH. It carries out the reaction UDP-4-amino-4-deoxy-beta-L-arabinose + (6R)-10-formyltetrahydrofolate = UDP-4-deoxy-4-formamido-beta-L-arabinose + (6S)-5,6,7,8-tetrahydrofolate + H(+). It participates in nucleotide-sugar biosynthesis; UDP-4-deoxy-4-formamido-beta-L-arabinose biosynthesis; UDP-4-deoxy-4-formamido-beta-L-arabinose from UDP-alpha-D-glucuronate: step 1/3. It functions in the pathway nucleotide-sugar biosynthesis; UDP-4-deoxy-4-formamido-beta-L-arabinose biosynthesis; UDP-4-deoxy-4-formamido-beta-L-arabinose from UDP-alpha-D-glucuronate: step 3/3. The protein operates within bacterial outer membrane biogenesis; lipopolysaccharide biosynthesis. Bifunctional enzyme that catalyzes the oxidative decarboxylation of UDP-glucuronic acid (UDP-GlcUA) to UDP-4-keto-arabinose (UDP-Ara4O) and the addition of a formyl group to UDP-4-amino-4-deoxy-L-arabinose (UDP-L-Ara4N) to form UDP-L-4-formamido-arabinose (UDP-L-Ara4FN). The modified arabinose is attached to lipid A and is required for resistance to polymyxin and cationic antimicrobial peptides. This Salmonella schwarzengrund (strain CVM19633) protein is Bifunctional polymyxin resistance protein ArnA.